The following is a 121-amino-acid chain: Putative iron-sulfur cluster insertion protein ErpA (121 aa).

Iron-sulfur cluster contacts are provided by C49, C113, and C115.

It belongs to the HesB/IscA family. In terms of assembly, homodimer. Requires iron-sulfur cluster as cofactor.

Required for insertion of 4Fe-4S clusters. The protein is Putative iron-sulfur cluster insertion protein ErpA of Paraburkholderia phymatum (strain DSM 17167 / CIP 108236 / LMG 21445 / STM815) (Burkholderia phymatum).